Reading from the N-terminus, the 445-residue chain is Trigger factor (445 aa).

The region spanning 166–251 (GDVVVVDFVG…AKALKRPVDV (86 aa)) is the PPIase FKBP-type domain.

It belongs to the FKBP-type PPIase family. Tig subfamily.

It is found in the cytoplasm. The catalysed reaction is [protein]-peptidylproline (omega=180) = [protein]-peptidylproline (omega=0). Functionally, involved in protein export. Acts as a chaperone by maintaining the newly synthesized protein in an open conformation. Functions as a peptidyl-prolyl cis-trans isomerase. The polypeptide is Trigger factor (Gluconacetobacter diazotrophicus (strain ATCC 49037 / DSM 5601 / CCUG 37298 / CIP 103539 / LMG 7603 / PAl5)).